Consider the following 86-residue polypeptide: Curamycin polyketide synthase acyl carrier protein (86 aa).

The 80-residue stretch at 7–86 (QVTVEELATL…VVNGALASGA (80 aa)) folds into the Carrier domain. At Ser-44 the chain carries O-(pantetheine 4'-phosphoryl)serine.

Post-translationally, 4'-phosphopantetheine is transferred from CoA to a specific serine of the apo-ACP-like protein.

It participates in antibiotic biosynthesis; curamycin biosynthesis. Functionally, acyl carrier protein. The sequence is that of Curamycin polyketide synthase acyl carrier protein (curE) from Streptomyces cyaneus (Streptomyces curacoi).